Here is a 385-residue protein sequence, read N- to C-terminus: SWI/SNF-related matrix-associated actin-dependent regulator of chromatin subfamily B member 1 (385 aa).

Positions 1–113 (MMMMALSKTF…DEKYKAVSIS (113 aa)) are DNA-binding. Glycyl lysine isopeptide (Lys-Gly) (interchain with G-Cter in SUMO2) cross-links involve residues K106, K108, and K124. S129 carries the phosphoserine modification. Residue K161 forms a Glycyl lysine isopeptide (Lys-Gly) (interchain with G-Cter in SUMO2) linkage. Residues 183–243 (PEVLVPIRLD…VPAIASAIRQ (61 aa)) form an HIV-1 integrase-binding region. A run of 2 repeats spans residues 186-245 (LVPI…RQQI) and 259-319 (DQRV…RGQL). Residues 186 to 245 (LVPIRLDMEIDGQKLRDAFTWNMNEKLMTPEMFSEILCDDLDLNPLTFVPAIASAIRQQI) are MYC-binding. The interval 186–319 (LVPIRLDMEI…TIAYSIRGQL (134 aa)) is 2 X approximate tandem repeats. An interaction with PPP1R15A region spans residues 304 to 318 (GGEFVTTIAYSIRGQ).

The protein belongs to the SNF5 family. Component of the multiprotein chromatin-remodeling complexes SWI/SNF: SWI/SNF-A (BAF), SWI/SNF-B (PBAF) and related complexes. The canonical complex contains a catalytic subunit (either SMARCA4/BRG1/BAF190A or SMARCA2/BRM/BAF190B) and at least SMARCE1, ACTL6A/BAF53, SMARCC1/BAF155, SMARCC2/BAF170, and SMARCB1/SNF5/BAF47. Other subunits specific to each of the complexes may also be present permitting several possible combinations developmentally and tissue specific. Component of the BAF complex, which includes at least actin (ACTB), ARID1A/BAF250A, ARID1B/BAF250B, SMARCA2/BRM, SMARCA4/BRG1/BAF190A, ACTL6A/BAF53, ACTL6B/BAF53B, SMARCE1/BAF57 SMARCC1/BAF155, SMARCC2/BAF170, SMARCB1/SNF5/INI1, and one or more SMARCD1/BAF60A, SMARCD2/BAF60B, or SMARCD3/BAF60C. In muscle cells, the BAF complex also contains DPF3. Component of neural progenitors-specific chromatin remodeling complex (npBAF complex) composed of at least, ARID1A/BAF250A or ARID1B/BAF250B, SMARCD1/BAF60A, SMARCD3/BAF60C, SMARCA2/BRM/BAF190B, SMARCA4/BRG1/BAF190A, SMARCB1/BAF47, SMARCC1/BAF155, SMARCE1/BAF57, SMARCC2/BAF170, PHF10/BAF45A, ACTL6A/BAF53A and actin. Component of neuron-specific chromatin remodeling complex (nBAF complex) composed of at least, ARID1A/BAF250A or ARID1B/BAF250B, SMARCD1/BAF60A, SMARCD3/BAF60C, SMARCA2/BRM/BAF190B, SMARCA4/BRG1/BAF190A, SMARCB1/BAF47, SMARCC1/BAF155, SMARCE1/BAF57, SMARCC2/BAF170, DPF1/BAF45B, DPF3/BAF45C, ACTL6B/BAF53B and actin. Component of the SWI/SNF-B (PBAF) chromatin remodeling complex, at least composed of SMARCA4/BRG1, SMARCB1/BAF47/SNF5, ACTL6A/BAF53A or ACTL6B/BAF53B, SMARCE1/BAF57, SMARCD1/BAF60A, SMARCD2/BAF60B, perhaps SMARCD3/BAF60C, SMARCC1/BAF155, SMARCC2/BAF170, PBRM1/BAF180, ARID2/BAF200 and actin. Binds to double-stranded DNA. Interacts with CEBPB (when not methylated). Interacts with PIH1D1. Interacts with MYK and MAEL. Interacts with PPP1R15A. Interacts with DPF2. Interacts with YWHAZ. Interacts with ERCC6. Interacts with FOS, FOSB isoform 1 and 2, FOSL1 and FOSL2. As to quaternary structure, (Microbial infection) Binds tightly to the human immunodeficiency virus-type 1 (HIV-1) integrase in vitro and stimulates its DNA-joining activity. Interacts with human papillomavirus 18 E1 protein to stimulate its viral replication. Interacts with Epstein-Barr virus protein EBNA-2.

It is found in the nucleus. In terms of biological role, core component of the BAF (hSWI/SNF) complex. This ATP-dependent chromatin-remodeling complex plays important roles in cell proliferation and differentiation, in cellular antiviral activities and inhibition of tumor formation. The BAF complex is able to create a stable, altered form of chromatin that constrains fewer negative supercoils than normal. This change in supercoiling would be due to the conversion of up to one-half of the nucleosomes on polynucleosomal arrays into asymmetric structures, termed altosomes, each composed of 2 histones octamers. Stimulates in vitro the remodeling activity of SMARCA4/BRG1/BAF190A. Involved in activation of CSF1 promoter. Belongs to the neural progenitors-specific chromatin remodeling complex (npBAF complex) and the neuron-specific chromatin remodeling complex (nBAF complex). During neural development a switch from a stem/progenitor to a postmitotic chromatin remodeling mechanism occurs as neurons exit the cell cycle and become committed to their adult state. The transition from proliferating neural stem/progenitor cells to postmitotic neurons requires a switch in subunit composition of the npBAF and nBAF complexes. As neural progenitors exit mitosis and differentiate into neurons, npBAF complexes which contain ACTL6A/BAF53A and PHF10/BAF45A, are exchanged for homologous alternative ACTL6B/BAF53B and DPF1/BAF45B or DPF3/BAF45C subunits in neuron-specific complexes (nBAF). The npBAF complex is essential for the self-renewal/proliferative capacity of the multipotent neural stem cells. The nBAF complex along with CREST plays a role regulating the activity of genes essential for dendrite growth. Plays a key role in cell-cycle control and causes cell cycle arrest in G0/G1. In Homo sapiens (Human), this protein is SWI/SNF-related matrix-associated actin-dependent regulator of chromatin subfamily B member 1 (SMARCB1).